The sequence spans 430 residues: Glutamine synthetase, chloroplastic/mitochondrial (430 aa).

A chloroplast and mitochondrion-targeting transit peptide spans 1-45; sequence MAQILAASPTCQMRVPKHSSVIASSSKLWSSVVLKQKKQSNNKVR. The GS beta-grasp domain maps to 77–157; sequence IIAEYIWIGG…VICDTWTPAG (81 aa). Residues 97–122 are disordered; the sequence is TIEKPVEDPSELPKWNYDGSSTGQAP. Position 106 is a phosphoserine (Ser106). The region spanning 161 to 430 is the GS catalytic domain; the sequence is PTNKRAKAAE…LAAQKLSLNV (270 aa).

It belongs to the glutamine synthetase family. As to quaternary structure, homooctamer. Expressed in mesophyll and epidermal cells of leaves.

Its subcellular location is the plastid. The protein resides in the chloroplast. It localises to the mitochondrion. The catalysed reaction is L-glutamate + NH4(+) + ATP = L-glutamine + ADP + phosphate + H(+). Its function is as follows. The light-modulated chloroplast/mitochondrial enzyme, encoded by a nuclear gene and expressed primarily in leaves, is responsible for the reassimilation of the ammonia generated by photorespiration. In Arabidopsis thaliana (Mouse-ear cress), this protein is Glutamine synthetase, chloroplastic/mitochondrial (GLN2).